Here is a 252-residue protein sequence, read N- to C-terminus: LexA repressor (252 aa).

Positions methionine 1–arginine 46 are disordered. Positions isoleucine 67–lysine 87 form a DNA-binding region, H-T-H motif. Catalysis depends on for autocatalytic cleavage activity residues serine 176 and lysine 213.

This sequence belongs to the peptidase S24 family. Homodimer.

It carries out the reaction Hydrolysis of Ala-|-Gly bond in repressor LexA.. Represses a number of genes involved in the response to DNA damage (SOS response), including recA and lexA. In the presence of single-stranded DNA, RecA interacts with LexA causing an autocatalytic cleavage which disrupts the DNA-binding part of LexA, leading to derepression of the SOS regulon and eventually DNA repair. This chain is LexA repressor, found in Thermobifida fusca (strain YX).